Here is a 360-residue protein sequence, read N- to C-terminus: Phospho-N-acetylmuramoyl-pentapeptide-transferase (360 aa).

Helical transmembrane passes span Val27–Phe47, Thr71–Ala91, Val98–Leu118, Leu142–Met162, Tyr168–Ser188, Gly199–Thr219, Ala236–Phe256, Val263–Leu283, Ile288–Val308, and Val338–Lys358.

It belongs to the glycosyltransferase 4 family. MraY subfamily. Mg(2+) is required as a cofactor.

The protein resides in the cell inner membrane. It catalyses the reaction UDP-N-acetyl-alpha-D-muramoyl-L-alanyl-gamma-D-glutamyl-meso-2,6-diaminopimeloyl-D-alanyl-D-alanine + di-trans,octa-cis-undecaprenyl phosphate = di-trans,octa-cis-undecaprenyl diphospho-N-acetyl-alpha-D-muramoyl-L-alanyl-D-glutamyl-meso-2,6-diaminopimeloyl-D-alanyl-D-alanine + UMP. It functions in the pathway cell wall biogenesis; peptidoglycan biosynthesis. Functionally, catalyzes the initial step of the lipid cycle reactions in the biosynthesis of the cell wall peptidoglycan: transfers peptidoglycan precursor phospho-MurNAc-pentapeptide from UDP-MurNAc-pentapeptide onto the lipid carrier undecaprenyl phosphate, yielding undecaprenyl-pyrophosphoryl-MurNAc-pentapeptide, known as lipid I. The polypeptide is Phospho-N-acetylmuramoyl-pentapeptide-transferase (Psychromonas ingrahamii (strain DSM 17664 / CCUG 51855 / 37)).